Here is an 80-residue protein sequence, read N- to C-terminus: UPF0512 protein J (80 aa).

This sequence belongs to the UPF0512 family.

This is UPF0512 protein J from Dictyostelium discoideum (Social amoeba).